Consider the following 161-residue polypeptide: Ribosome maturation factor RimP (161 aa).

This sequence belongs to the RimP family.

The protein localises to the cytoplasm. Its function is as follows. Required for maturation of 30S ribosomal subunits. The protein is Ribosome maturation factor RimP of Rickettsia conorii (strain ATCC VR-613 / Malish 7).